The chain runs to 349 residues: Putative ABC transporter permease protein MJ0087 (349 aa).

The next 9 helical transmembrane spans lie at 15 to 35, 69 to 89, 100 to 120, 135 to 155, 166 to 186, 206 to 226, 254 to 274, 295 to 315, and 318 to 338; these read IIFGIILLITLFLSSIYALCV, IFAAIISGMSLAVAGAVMQCI, MGISHGAMFGACFAIIMFGFG, MITIFAFLGALIGVVVILLLA, ILAGVAMSSLFTAGTMLIQYF, AIWTEIYIMAAVMIPSLIYFM, LIGMLVASLLTSVNVAFLGII, FLIPISALFGAVLLLIADTFA, and IIAPIVLPVGILTSFLGAPMF.

This sequence belongs to the binding-protein-dependent transport system permease family. FecCD subfamily.

The protein resides in the cell membrane. Probably part of a binding-protein-dependent transport system. Probably responsible for the translocation of the substrate across the membrane. The protein is Putative ABC transporter permease protein MJ0087 of Methanocaldococcus jannaschii (strain ATCC 43067 / DSM 2661 / JAL-1 / JCM 10045 / NBRC 100440) (Methanococcus jannaschii).